Here is a 583-residue protein sequence, read N- to C-terminus: 2-succinyl-5-enolpyruvyl-6-hydroxy-3-cyclohexene-1-carboxylate synthase (583 aa).

The protein belongs to the TPP enzyme family. MenD subfamily. Homodimer. Requires Mg(2+) as cofactor. Mn(2+) is required as a cofactor. The cofactor is thiamine diphosphate.

The catalysed reaction is isochorismate + 2-oxoglutarate + H(+) = 5-enolpyruvoyl-6-hydroxy-2-succinyl-cyclohex-3-ene-1-carboxylate + CO2. Its pathway is quinol/quinone metabolism; 1,4-dihydroxy-2-naphthoate biosynthesis; 1,4-dihydroxy-2-naphthoate from chorismate: step 2/7. It functions in the pathway cofactor biosynthesis; phylloquinone biosynthesis. Its function is as follows. Catalyzes the thiamine diphosphate-dependent decarboxylation of 2-oxoglutarate and the subsequent addition of the resulting succinic semialdehyde-thiamine pyrophosphate anion to isochorismate to yield 2-succinyl-5-enolpyruvyl-6-hydroxy-3-cyclohexene-1-carboxylate (SEPHCHC). This Trichormus variabilis (strain ATCC 29413 / PCC 7937) (Anabaena variabilis) protein is 2-succinyl-5-enolpyruvyl-6-hydroxy-3-cyclohexene-1-carboxylate synthase.